Reading from the N-terminus, the 630-residue chain is Conserved oligomeric Golgi complex subunit 6 (630 aa).

This sequence belongs to the COG6 family. As to quaternary structure, component of the conserved oligomeric Golgi complex which is composed of eight different subunits and is required for normal Golgi morphology and localization.

The protein localises to the golgi apparatus membrane. In terms of biological role, required for normal Golgi function. In Drosophila melanogaster (Fruit fly), this protein is Conserved oligomeric Golgi complex subunit 6.